Reading from the N-terminus, the 152-residue chain is Chemokine-like factor (152 aa).

Positions phenylalanine 13–arginine 133 constitute an MARVEL domain. Helical transmembrane passes span cysteine 19 to glycine 39, isoleucine 46 to glycine 66, valine 81 to proline 101, and isoleucine 108 to methionine 128.

It belongs to the chemokine-like factor family. As to expression, ubiquitous.

The protein localises to the membrane. In terms of biological role, may play an important role in inflammation and regeneration of skeletal muscle. Essential for embryonic development. The protein is Chemokine-like factor (Cklf) of Mus musculus (Mouse).